A 369-amino-acid chain; its full sequence is MNTSTNSSAFAPLKNDTFLRACLRQATDYTPIWMMRQAGRFLPEYRATRAKAGSFMGLATNTDYATEVTLQPVERFPIDAAILFSDILTVPDAMGLGLSFALGEGPKFAHPVQDEAAVAKLAVPDMDKLRYVFDAVTSIRKALNGKVPLIGFSGSPWTLGCYMVEGAGSDDYRLVKTMLYSRPDLMHRILQINADSVAQYLNAQIEAGAQAVMIFDSWGGVLADGAFQEFSLAYTARVLAQLKREHNGARIPRIVFTKGGGMWLKEMGLLDCDVLGLDWTVNLAKARAIVGDSKALQGNMDPNVLFASPAQIAAEATRVLDSFGTPYAGEGTGPTHIFNLGHGISQHTPPEHVAALVQAVHEHSRKMRA.

Substrate is bound by residues 36–40, D86, Y162, S217, and H342; that span reads RQAGR.

The protein belongs to the uroporphyrinogen decarboxylase family. Homodimer.

The protein resides in the cytoplasm. It catalyses the reaction uroporphyrinogen III + 4 H(+) = coproporphyrinogen III + 4 CO2. The protein operates within porphyrin-containing compound metabolism; protoporphyrin-IX biosynthesis; coproporphyrinogen-III from 5-aminolevulinate: step 4/4. Catalyzes the decarboxylation of four acetate groups of uroporphyrinogen-III to yield coproporphyrinogen-III. This chain is Uroporphyrinogen decarboxylase, found in Albidiferax ferrireducens (strain ATCC BAA-621 / DSM 15236 / T118) (Rhodoferax ferrireducens).